A 381-amino-acid chain; its full sequence is Prostatic acid phosphatase (381 aa).

The first 31 residues, 1–31 (MRAVPLHLVGTASLTLGFLLLLSLRLDPGQA), serve as a signal peptide directing secretion. Arg-42 lines the substrate pocket. His-43 (nucleophile) is an active-site residue. Position 46 (Arg-46) interacts with substrate. An N-linked (GlcNAc...) asparagine glycan is attached at Asn-93. Substrate is bound at residue Arg-110. 3 cysteine pairs are disulfide-bonded: Cys-160–Cys-371, Cys-214–Cys-312, and Cys-346–Cys-350. N-linked (GlcNAc...) asparagine glycosylation occurs at Asn-219. His-288 provides a ligand contact to substrate. Asp-289 serves as the catalytic Proton donor. An N-linked (GlcNAc...) asparagine glycan is attached at Asn-332.

Belongs to the histidine acid phosphatase family. Homodimer; dimer formation is required for phosphatase activity. In terms of processing, N-glycosylated. In terms of tissue distribution, expressed in prostate epithelium. Also expressed in the pelvic nerve and sacral spinal cord. Localizes in peptidergic and non-peptidergic nociceptive (pain-sensing) neurons.

Its subcellular location is the secreted. The protein resides in the cell membrane. It localises to the lysosome membrane. The enzyme catalyses a phosphate monoester + H2O = an alcohol + phosphate. It catalyses the reaction a ribonucleoside 5'-phosphate + H2O = a ribonucleoside + phosphate. It carries out the reaction 1-(9Z-octadecenoyl)-sn-glycero-3-phosphate + H2O = 1-(9Z-octadecenoyl)-sn-glycerol + phosphate. The catalysed reaction is O-phospho-L-tyrosyl-[protein] + H2O = L-tyrosyl-[protein] + phosphate. Inhibited by L(+)-tartrate. A non-specific tyrosine phosphatase that dephosphorylates a diverse number of substrates under acidic conditions (pH 4-6) including alkyl, aryl, and acyl orthophosphate monoesters and phosphorylated proteins. Has lipid phosphatase activity and inactivates lysophosphatidic acid in seminal plasma. Functionally, in addition to its tyrosine phosphatase activity, also has ecto-5'-nucleotidase activity in dorsal root ganglion (DRG) neurons. Generates adenosine from AMP. This extracellular adenosine leads to a decrease in chronic pain by activating A1R in nociceptive neurons. This Rattus norvegicus (Rat) protein is Prostatic acid phosphatase (Acp3).